A 552-amino-acid polypeptide reads, in one-letter code: HTH-type transcriptional regulator SgrR (552 aa).

Positions 1–116 constitute an HTH marR-type domain; the sequence is MPSGRLQQQF…LISHLGRSFR (116 aa). Residues 26–49 constitute a DNA-binding region (H-T-H motif); it reads LNELADLLNCSRRHMRTLLNTMQA. Residues 163 to 493 form a solute-binding region; it reads ELEADIAHHW…RDWQDDAAQW (331 aa).

In terms of biological role, activates the small RNA gene sgrS under glucose-phosphate stress conditions as well as yfdZ. Represses its own transcription under both stress and non-stress conditions. Might act as a sensor of the intracellular accumulation of phosphoglucose by binding these molecules in its C-terminal solute-binding domain. The sequence is that of HTH-type transcriptional regulator SgrR from Salmonella choleraesuis (strain SC-B67).